A 259-amino-acid polypeptide reads, in one-letter code: Submandibular glandular kallikrein-9 (259 aa).

The signal sequence occupies residues 1 to 18; the sequence is MWFLILFLALSLGQIDAA. The propeptide at 19-24 is activation peptide; the sequence is PPGQSR. Residues 25-256 form the Peptidase S1 domain; the sequence is VVGGYNCETN…FTSWIKKVMK (232 aa). Cystine bridges form between C31–C171, C48–C64, C150–C217, C182–C196, and C207–C232. The active-site Charge relay system is the H63. N106 is a glycosylation site (N-linked (GlcNAc...) asparagine). D118 serves as the catalytic Charge relay system. S211 serves as the catalytic Charge relay system.

This sequence belongs to the peptidase S1 family. Kallikrein subfamily. Heterodimer of a light chain and heavy chain linked by a disulfide bond.

The catalysed reaction is Preferential cleavage of Arg-|-Xaa bonds in small molecule substrates. Highly selective action to release kallidin (lysyl-bradykinin) from kininogen involves hydrolysis of Met-|-Xaa or Leu-|-Xaa.. In terms of biological role, glandular kallikreins cleave Met-Lys and Arg-Ser bonds in kininogen to release Lys-bradykinin. This enzyme has a vasoconstrictor activity. KLK-9 has both a chymotrypsin-like and a trypsin-like properties. The protein is Submandibular glandular kallikrein-9 (Klk9) of Rattus norvegicus (Rat).